An 877-amino-acid polypeptide reads, in one-letter code: GTPase activating protein homolog 2 (877 aa).

Residues 14 to 285 enclose the F-BAR domain; it reads FKFTDNLWDG…SVEMIDITND (272 aa). Residues 130–214 are a coiled coil; it reads QEGIKLKQDM…SNCDEEYREQ (85 aa). Residues 374 to 560 enclose the Rho-GAP domain; sequence VSLDELMNRQ…TLIKQIPPPL (187 aa). 3 disordered regions span residues 589-612, 644-704, and 749-800; these read DQLSNDDNNNSNTNTSNISIGSGS, LPPL…AEPT, and AATP…LAST. Low complexity-rich tracts occupy residues 593 to 612, 653 to 676, and 749 to 779; these read NDDNNNSNTNTSNISIGSGS, SGSGNESNSSSSNSTTTPTGSPTT, and AATPTTTTPTTTPTTTTSPTTATIPAVSTST. Over residues 780-800 the composition is skewed to polar residues; that stretch reads IKTSSPDRTTPLTSSPPLAST.

The protein resides in the cytoplasm. The protein localises to the contractile vacuole. Functionally, rho GTPase-activating protein involved in the signal transduction pathway. Regulator of the contractile vacuole network as well as involved in driving vacuole emptying. The sequence is that of GTPase activating protein homolog 2 (mgp2) from Dictyostelium discoideum (Social amoeba).